The following is a 402-amino-acid chain: Bisdemethoxycurcumin synthase (402 aa).

Residue Cys-174 is the Acyl-thioester intermediate of the active site.

Belongs to the thiolase-like superfamily. Chalcone/stilbene synthases family. As to quaternary structure, homodimer.

The enzyme catalyses 2 4-coumaroyl-CoA + malonyl-CoA + H2O + H(+) = bisdemethoxycurcumin + 2 CO2 + 3 CoA. It functions in the pathway secondary metabolite biosynthesis; flavonoid biosynthesis. Its function is as follows. Plant-specific type III polyketide synthase (PKS) that catalyzes the one-pot formation of the C6-C7-C6 diarylheptanoid scaffold of bisdemethoxycurcumin by the condensation of two molecules of 4-coumaroyl-CoA and one molecule of malonyl-CoA. This is Bisdemethoxycurcumin synthase from Oryza sativa subsp. japonica (Rice).